The following is a 623-amino-acid chain: NAD-dependent malic enzyme, mitochondrial (623 aa).

A mitochondrion-targeting transit peptide spans 1–31 (MLVLCSRSRLTSSLIRRLKDQIANVSNHRSF). R88 and R122 together coordinate fumarate. Catalysis depends on S143, which acts as the Proton donor. R196 contacts (S)-malate. Residue R196 coordinates NAD(+). K214 acts as the Proton acceptor in catalysis. A divalent metal cation contacts are provided by E285 and D286. Position 289 (N289) interacts with NAD(+). Residue D309 participates in a divalent metal cation binding. Residue A345 participates in NAD(+) binding. N464 and N509 together coordinate (S)-malate.

This sequence belongs to the malic enzymes family. In terms of assembly, heterodimer of two related subunits. The cofactor is Mg(2+). It depends on Mn(2+) as a cofactor.

Its subcellular location is the mitochondrion matrix. The catalysed reaction is (S)-malate + NAD(+) = pyruvate + CO2 + NADH. The protein operates within photosynthesis; C4 acid pathway. The protein is NAD-dependent malic enzyme, mitochondrial of Amaranthus hypochondriacus (Prince-of-Wales feather).